The sequence spans 681 residues: DNA-directed RNA polymerase subunit beta' (681 aa).

Cysteine 69, cysteine 71, cysteine 87, and cysteine 90 together coordinate Zn(2+). Mg(2+) contacts are provided by aspartate 489, aspartate 491, and aspartate 493.

This sequence belongs to the RNA polymerase beta' chain family. RpoC1 subfamily. In plastids the minimal PEP RNA polymerase catalytic core is composed of four subunits: alpha, beta, beta', and beta''. When a (nuclear-encoded) sigma factor is associated with the core the holoenzyme is formed, which can initiate transcription. Mg(2+) is required as a cofactor. Zn(2+) serves as cofactor.

It localises to the plastid. The protein localises to the chloroplast. The enzyme catalyses RNA(n) + a ribonucleoside 5'-triphosphate = RNA(n+1) + diphosphate. DNA-dependent RNA polymerase catalyzes the transcription of DNA into RNA using the four ribonucleoside triphosphates as substrates. The polypeptide is DNA-directed RNA polymerase subunit beta' (Solanum bulbocastanum (Wild potato)).